We begin with the raw amino-acid sequence, 255 residues long: MSNITMKELLEAGVHFGHQTKRWNPKMKPYIFGARNGIYIIDLQKTVRLFKSAYNFVFEAAQAGETMLFVGTKKQAQDSVAEEAQRCGMFFVNDRWLGGMLTNFSTVKQSIERLKRIDAMFADGTIEAYTKKEALQMEKERVKLEKTLGGIKGMNKLPGLLFVIDPKNEEIAVSEAKKLGIPVVAIVDTNCDPDNIDYVIPGNDDAIRAIRLLTSKVADAMIEGGQARNTQLQTDTEGAEFAAGEETGEGTVAEA.

This sequence belongs to the universal ribosomal protein uS2 family.

This is Small ribosomal subunit protein uS2 from Geotalea daltonii (strain DSM 22248 / JCM 15807 / FRC-32) (Geobacter daltonii).